The primary structure comprises 198 residues: Recombination protein RecR (198 aa).

The segment at 57-72 adopts a C4-type zinc-finger fold; the sequence is CEKCNTFTEAQICEVC. The 96-residue stretch at 80–175 folds into the Toprim domain; it reads TLLCVVETPA…AVTRLARGVP (96 aa).

This sequence belongs to the RecR family.

In terms of biological role, may play a role in DNA repair. It seems to be involved in an RecBC-independent recombinational process of DNA repair. It may act with RecF and RecO. This is Recombination protein RecR from Burkholderia vietnamiensis (strain G4 / LMG 22486) (Burkholderia cepacia (strain R1808)).